Here is a 217-residue protein sequence, read N- to C-terminus: EF-hand domain-containing protein D2 homolog (217 aa).

Residues 1 to 28 (MSVSSNASSASNKDSVDSPSSTTNTDSS) show a composition bias toward low complexity. The tract at residues 1-29 (MSVSSNASSASNKDSVDSPSSTTNTDSSE) is disordered. 2 consecutive EF-hand domains span residues 69-104 (NQIK…LGAP) and 105-140 (QTHL…AQAG). Asp-82, Asp-86, Glu-93, Asp-118, Asp-120, Asp-122, Lys-124, and Glu-129 together coordinate Ca(2+). Residues 191 to 204 (EQEERRREEEERAQ) show a composition bias toward basic and acidic residues. Positions 191 to 217 (EQEERRREEEERAQRRQQFQQRAAIFQ) are disordered. Over residues 206–217 (RQQFQQRAAIFQ) the composition is skewed to low complexity.

The protein is EF-hand domain-containing protein D2 homolog (Swip-1) of Drosophila melanogaster (Fruit fly).